A 291-amino-acid chain; its full sequence is Beta-lactamase CTX-M-8 (291 aa).

The signal sequence occupies residues 1–30 (MMRHRVKRMMLMTTACISLLLGSAPLYAQA). The Nucleophile; acyl-ester intermediate role is filled by Ser73. The a beta-lactam site is built by Lys76, Ser133, Glu169, and Ser240.

The protein belongs to the class-A beta-lactamase family. Monomer.

The protein localises to the secreted. It catalyses the reaction a beta-lactam + H2O = a substituted beta-amino acid. With respect to regulation, inhibited by the beta-lactamase-blocking agents clavulanic acid, tazobactam and sulbactam; in the DH5alpha strain of E.coli. Functionally, extended-spectrum beta-lactamase (ESBL) which confers resistance to penicillins, as well as first, third and fourth-generation cephalosporins. Has cefotaxime-hydrolyzing activity. Inactive against cephalosporin antibiotic, cefoxitin, and the carbapenem, imipenem. The chain is Beta-lactamase CTX-M-8 from Citrobacter amalonaticus.